The primary structure comprises 233 residues: Biosynthetic peptidoglycan transglycosylase (233 aa).

Residues 8-28 (LIALPVGIFIFFNAYVYGNII) traverse the membrane as a helical segment.

Belongs to the glycosyltransferase 51 family.

It is found in the cell inner membrane. The catalysed reaction is [GlcNAc-(1-&gt;4)-Mur2Ac(oyl-L-Ala-gamma-D-Glu-L-Lys-D-Ala-D-Ala)](n)-di-trans,octa-cis-undecaprenyl diphosphate + beta-D-GlcNAc-(1-&gt;4)-Mur2Ac(oyl-L-Ala-gamma-D-Glu-L-Lys-D-Ala-D-Ala)-di-trans,octa-cis-undecaprenyl diphosphate = [GlcNAc-(1-&gt;4)-Mur2Ac(oyl-L-Ala-gamma-D-Glu-L-Lys-D-Ala-D-Ala)](n+1)-di-trans,octa-cis-undecaprenyl diphosphate + di-trans,octa-cis-undecaprenyl diphosphate + H(+). Its pathway is cell wall biogenesis; peptidoglycan biosynthesis. In terms of biological role, peptidoglycan polymerase that catalyzes glycan chain elongation from lipid-linked precursors. In Neisseria meningitidis serogroup C (strain 053442), this protein is Biosynthetic peptidoglycan transglycosylase.